A 114-amino-acid polypeptide reads, in one-letter code: Histone H2A.Z-specific chaperone chz-1 (114 aa).

Positions M1–F22 are enriched in polar residues. Residues M1–E114 form a disordered region. The segment covering S24–G40 has biased composition (basic and acidic residues). Composition is skewed to acidic residues over residues E41–D68 and P93–E114.

It belongs to the CHZ1 family. In terms of assembly, forms a heterotrimer with H2A.Z-H2B, stabilizing the association of the histone dimer. Also, with a lower affinity, forms a heterotrimer with H2A-H2B.

It localises to the nucleus. Forms a chaperone-bound H2A.Z-H2B complex that acts as a source for SWR1 complex-dependent H2A to H2A.Z histone replacement in chromatin. The polypeptide is Histone H2A.Z-specific chaperone chz-1 (chz-1) (Neurospora crassa (strain ATCC 24698 / 74-OR23-1A / CBS 708.71 / DSM 1257 / FGSC 987)).